The primary structure comprises 136 residues: ATP synthase epsilon chain, chloroplastic (136 aa).

Belongs to the ATPase epsilon chain family. In terms of assembly, F-type ATPases have 2 components, CF(1) - the catalytic core - and CF(0) - the membrane proton channel. CF(1) has five subunits: alpha(3), beta(3), gamma(1), delta(1), epsilon(1). CF(0) has three main subunits: a, b and c.

It localises to the plastid. Its subcellular location is the chloroplast thylakoid membrane. Produces ATP from ADP in the presence of a proton gradient across the membrane. In Chaetosphaeridium globosum (Charophycean green alga), this protein is ATP synthase epsilon chain, chloroplastic.